The primary structure comprises 146 residues: Mite group 2 allergen Der p 2 (146 aa).

A signal peptide spans 1 to 17 (MMYKILCLSLLVAAVAR). 3 disulfides stabilise this stretch: Cys25–Cys136, Cys38–Cys44, and Cys90–Cys95.

This sequence belongs to the NPC2 family.

The protein localises to the secreted. The protein is Mite group 2 allergen Der p 2 (DERP2) of Dermatophagoides pteronyssinus (European house dust mite).